We begin with the raw amino-acid sequence, 486 residues long: BTB/POZ domain and ankyrin repeat-containing protein NBCL (486 aa).

In terms of domain architecture, BTB spans 25–115 (SDVTFSVEGR…LYSGQVSIVP (91 aa)). The segment at 121-135 (RPNCGERGCWHTHCS) adopts a C2HC NPR-type zinc-finger fold. 4 residues coordinate Zn(2+): Cys-124, Cys-129, His-131, and Cys-134. ANK repeat units lie at residues 257–286 (QKIRRMRRALDSSDVELVKLMVMGEGLNLD), 287–316 (EALALHYAVENCSREVVKALLELGAADVNY), 321–350 (AGKTPLHIAAEMVSPDMVAVLLDHHADPNV), and 354–388 (DNVTPLDILRTLTSDFLFKGAIPGLTHIEPNKLRL). Disordered regions lie at residues 403–441 (EEGNANNNPPSSTTTTLPMYHHPMNDDHNSSSSSGNNHN) and 464–486 (QMSDDHGGRHGDPAMYHHSHHDY). 2 stretches are compositionally biased toward low complexity: residues 406–418 (NANNNPPSSTTTT) and 432–441 (SSSSSGNNHN). The span at 466–475 (SDDHGGRHGD) shows a compositional bias: basic and acidic residues.

It belongs to the plant 'ANKYRIN-BTB/POZ' family. 'NOOT-BOP-COCH-like' (NBCL) subfamily. As to quaternary structure, homodimer.

Its subcellular location is the nucleus. It localises to the cytoplasm. The protein localises to the cell membrane. It participates in protein modification; protein ubiquitination. Its function is as follows. May act as a substrate-specific adapter of an E3 ubiquitin-protein ligase complex (CUL3-RBX1-BTB) which mediates the ubiquitination and subsequent proteasomal degradation of target proteins. Transcriptional co-regulator involved in the promotion of leaf and floral meristem fate and determinacy. Necessary for the development of stipules at the base of petioles. Required for the abscission of senescent organs, probably by regulating the cell wall disorganization in abscission zones (AZs, e.g. pulvini at the base of leaves). Promotes slightly root-cap border cells separation from the root tip. Involved in the coordination of the symbiotic nodule developmental program; promotes the formation of root nodules by interacting directly with APP1 to modulate the expression of the nuclear transcription factor Y subunit (NF-YA1), a key nodulin. Necessary for the robust maintenance of nodule identity throughout the nodule developmental program. The sequence is that of BTB/POZ domain and ankyrin repeat-containing protein NBCL from Lupinus angustifolius (Narrow-leaved blue lupine).